A 572-amino-acid polypeptide reads, in one-letter code: Proline--tRNA ligase (572 aa).

This sequence belongs to the class-II aminoacyl-tRNA synthetase family. ProS type 1 subfamily. As to quaternary structure, homodimer.

The protein resides in the cytoplasm. The catalysed reaction is tRNA(Pro) + L-proline + ATP = L-prolyl-tRNA(Pro) + AMP + diphosphate. Functionally, catalyzes the attachment of proline to tRNA(Pro) in a two-step reaction: proline is first activated by ATP to form Pro-AMP and then transferred to the acceptor end of tRNA(Pro). As ProRS can inadvertently accommodate and process non-cognate amino acids such as alanine and cysteine, to avoid such errors it has two additional distinct editing activities against alanine. One activity is designated as 'pretransfer' editing and involves the tRNA(Pro)-independent hydrolysis of activated Ala-AMP. The other activity is designated 'posttransfer' editing and involves deacylation of mischarged Ala-tRNA(Pro). The misacylated Cys-tRNA(Pro) is not edited by ProRS. The chain is Proline--tRNA ligase from Caldicellulosiruptor bescii (strain ATCC BAA-1888 / DSM 6725 / KCTC 15123 / Z-1320) (Anaerocellum thermophilum).